Here is a 689-residue protein sequence, read N- to C-terminus: uncharacterized protein (689 aa).

It localises to the mitochondrion. This is an uncharacterized protein from Schizosaccharomyces pombe (strain 972 / ATCC 24843) (Fission yeast).